A 424-amino-acid chain; its full sequence is Splicing factor 3B subunit 4 (424 aa).

An N-acetylalanine modification is found at alanine 2. 2 RRM domains span residues 13–91 (ATVY…KASA) and 100–179 (ANIF…YAFK). A Phosphotyrosine modification is found at tyrosine 56. The interval 207–424 (PHQLFADAPP…RGPLRGPLPQ (218 aa)) is disordered. A compositionally biased stretch (low complexity) spans 222–231 (NPVVSSLGSG). Over residues 232 to 268 (LPPPGMPPPGSFPPPVPPPGALPPGIPPAMPPPPMPP) the composition is skewed to pro residues. Composition is skewed to low complexity over residues 269–280 (GAAGHGPPSAGT) and 303–323 (HPGM…GHPH). 2 stretches are compositionally biased toward pro residues: residues 332 to 381 (QPPP…PLMP) and 388 to 424 (PPRP…PLPQ).

Belongs to the SF3B4 family. In terms of assembly, component of the 17S U2 SnRNP complex, a ribonucleoprotein complex that contains small nuclear RNA (snRNA) U2 and a number of specific proteins. Part of the SF3B subcomplex of the 17S U2 SnRNP complex. SF3B associates with the splicing subcomplex SF3A and a 12S RNA unit to form the U2 small nuclear ribonucleoproteins complex (U2 snRNP). SF3B4 has been found in complex spliceosome 'B' and 'C' as well. Component of the minor (U12-type spliceosome) spliceosome. Found in a complex with PRMT9, SF3B2 and SF3B4.

Its subcellular location is the nucleus. Its function is as follows. Component of the 17S U2 SnRNP complex of the spliceosome, a large ribonucleoprotein complex that removes introns from transcribed pre-mRNAs. The 17S U2 SnRNP complex (1) directly participates in early spliceosome assembly and (2) mediates recognition of the intron branch site during pre-mRNA splicing by promoting the selection of the pre-mRNA branch-site adenosine, the nucleophile for the first step of splicing. Within the 17S U2 SnRNP complex, SF3B4 is part of the SF3B subcomplex, which is required for 'A' complex assembly formed by the stable binding of U2 snRNP to the branchpoint sequence in pre-mRNA. Sequence independent binding of SF3A and SF3B subcomplexes upstream of the branch site is essential, it may anchor U2 snRNP to the pre-mRNA. May also be involved in the assembly of the 'E' complex. Also acts as a component of the minor spliceosome, which is involved in the splicing of U12-type introns in pre-mRNAs. The chain is Splicing factor 3B subunit 4 (SF3B4) from Homo sapiens (Human).